Consider the following 249-residue polypeptide: Homeobox protein TGIF2LX (249 aa).

2 disordered regions span residues methionine 1–proline 65 and aspartate 126–lysine 199. Over residues alanine 9–proline 27 the composition is skewed to basic and acidic residues. Positions alanine 28–aspartate 46 are enriched in polar residues. A DNA-binding region (homeobox; TALE-type) is located at residues glutamate 55 to aspartate 118. A compositionally biased stretch (polar residues) spans aspartate 159–glycine 172.

The protein belongs to the TALE/TGIF homeobox family.

It localises to the nucleus. In terms of biological role, may have a transcription role in testis. This chain is Homeobox protein TGIF2LX (TGIF2LX), found in Macaca mulatta (Rhesus macaque).